Here is a 1183-residue protein sequence, read N- to C-terminus: MGRLRKRFNEKGRQSGIQKMLNLKRARLHRSVREQESSSEVHANPEPDNQDSNAEILIDVPKEERQKRKQELKDQLLKENEGSISSKKKKRLDKYIENKLKKEEVASLIAKLAEERIDTSLLSSSKNLGKQATAKEKLKKSLLEEKLGLPLSDADSRLYKVVDVETTTTKSSTAETNAPEKYSTRSGFGFGFSTGTNESEITPNIKVLPPKKKKNASWGKMLNEDPEYDSAEEDYLSTDSEEFSEDSDNSSEENKDTNEPSTKDAEKTVPEDVVNLRSEQKLQPSFGHPEFENEDFDLETSEDDSSDDATERASRFKSWANKQILGADVGEKSHDVAPDNKIDNPDADMVRAQRMPRKLKMREEDVEPTADDIEIKGRKTTYTIINRPPEIQESRLALPIVAEEQRIMEQIFANDVVIICGATGSGKTTQLPQFLFEAGFSSPESENPGMIAITQPRRVAAVSIAKRVSEELTGFSSKVSYQIRFDSTINPDTAIKFMTDGILLRELSSDFLLTAYSAVIVDEAHERSVNTDILLGLLSRIVRLRREMSKSDQKVKPLKLIIMSATLRVTDFSENKLLFSVPPPIIKIDARQYPVSIHFNRTTKPDYLQDAFDKVCLIHKRLPAGSILVFLTGQQEVEQLCQMLRKRFVRSFRPLKSRARIVVSRKTMSVENEDLQSETEDIDQVPTSSSSSVTYDDESEPMYVLPLYSLLTTEDQMKVFDSSPEGHRMCIVATNVAETSITIPNIRYVVDCGKAKERVYNEKTSVQKFEVRWISKANADQRAGRAGRTGPGHCYRLYSSAVFDSSFPLHSLPEILRTPVESIVLQMKNMNIDNIANFPFPTSPGRSRLEKSLKLLSNLGAIDSEGVLTKLGEQMSLFPLSPRFSKMLIIGQQHGCLPYVIALVSALSINQLFVSKQSLLYDAHDKNSRSEETDLIDDDEIKQKEEYKNRMRGYFNAISRFQAIDPDAPALSLLSAVCAYDYASDKRKFCKENYLREKALEEVTNLRKQIIGLLKRYMVRVEKEFFKLQLKPPTSVQIKALRQFIASAYIDQVALYDKEKRGYVTLFPSGSEVVQFVPDRTYNIDSEYVVYLSLHESRSGRVYMSPLTEISPEHLARLAKNTTLLSYSKPLSYPPIRYLDNATKRECWVIPILSANIGTGSPSWNLPAVQIIQKRINGRWVNC.

Disordered regions lie at residues 1–92 (MGRL…KKRL) and 165–315 (ETTT…RASR). A compositionally biased stretch (basic and acidic residues) spans 60–81 (VPKEERQKRKQELKDQLLKENE). Composition is skewed to low complexity over residues 165-176 (ETTTTKSSTAET) and 184-196 (TRSG…STGT). Residues 224-251 (EDPEYDSAEEDYLSTDSEEFSEDSDNSS) show a composition bias toward acidic residues. Residues 252–270 (EENKDTNEPSTKDAEKTVP) show a composition bias toward basic and acidic residues. The segment covering 292–308 (ENEDFDLETSEDDSSDD) has biased composition (acidic residues). A Helicase ATP-binding domain is found at 408–585 (MEQIFANDVV…KLLFSVPPPI (178 aa)). ATP is bound at residue 421-428 (GATGSGKT). A DEAH box motif is present at residues 522-525 (DEAH). The 221-residue stretch at 611–831 (AFDKVCLIHK…SIVLQMKNMN (221 aa)) folds into the Helicase C-terminal domain. A compositionally biased stretch (acidic residues) spans 673-683 (EDLQSETEDID). The disordered stretch occupies residues 673–696 (EDLQSETEDIDQVPTSSSSSVTYD).

Belongs to the DEAD box helicase family. DEAH subfamily.

The protein localises to the nucleus. The protein resides in the nucleolus. The catalysed reaction is ATP + H2O = ADP + phosphate + H(+). This Schizosaccharomyces pombe (strain 972 / ATCC 24843) (Fission yeast) protein is Putative ATP-dependent RNA helicase PB1A10.06c.